The primary structure comprises 431 residues: F-box protein pof14 (431 aa).

The F-box; atypical domain maps to 172–186 (CPDEILQLIFSYCYD).

As to quaternary structure, component of the E3 ubiquitin ligase Skp1-Cullin-1-F-box (SCF) complex. Interacts with skp1, cul1 and erg9.

The protein localises to the cytoplasm. It is found in the nucleus. It localises to the endoplasmic reticulum. Its function is as follows. Expression is induced during oxidative stress. Plays an essential, SCF-independent, role in the stress response to hydrogen peroxide for survival, by negatively regulating ergosterol synthesis via direct binding to the squalene synthase erg9. This Schizosaccharomyces pombe (strain 972 / ATCC 24843) (Fission yeast) protein is F-box protein pof14 (pof14).